The following is a 273-amino-acid chain: Dermonecrotic toxin LdSicTox-alphaIB3avi (273 aa).

Residue His-5 is part of the active site. Positions 25 and 27 each coordinate Mg(2+). The active-site Nucleophile is His-41. 2 cysteine pairs are disulfide-bonded: Cys-45-Cys-51 and Cys-47-Cys-190. Asp-85 lines the Mg(2+) pocket.

Belongs to the arthropod phospholipase D family. Class II subfamily. The cofactor is Mg(2+). As to expression, expressed by the venom gland.

It localises to the secreted. It catalyses the reaction an N-(acyl)-sphingosylphosphocholine = an N-(acyl)-sphingosyl-1,3-cyclic phosphate + choline. The catalysed reaction is an N-(acyl)-sphingosylphosphoethanolamine = an N-(acyl)-sphingosyl-1,3-cyclic phosphate + ethanolamine. The enzyme catalyses a 1-acyl-sn-glycero-3-phosphocholine = a 1-acyl-sn-glycero-2,3-cyclic phosphate + choline. It carries out the reaction a 1-acyl-sn-glycero-3-phosphoethanolamine = a 1-acyl-sn-glycero-2,3-cyclic phosphate + ethanolamine. In terms of biological role, dermonecrotic toxins cleave the phosphodiester linkage between the phosphate and headgroup of certain phospholipids (sphingolipid and lysolipid substrates), forming an alcohol (often choline) and a cyclic phosphate. This toxin acts on sphingomyelin (SM). It may also act on ceramide phosphoethanolamine (CPE), lysophosphatidylcholine (LPC) and lysophosphatidylethanolamine (LPE), but not on lysophosphatidylserine (LPS), and lysophosphatidylglycerol (LPG). It acts by transphosphatidylation, releasing exclusively cyclic phosphate products as second products. Induces dermonecrosis, hemolysis, increased vascular permeability, edema, inflammatory response, and platelet aggregation. The sequence is that of Dermonecrotic toxin LdSicTox-alphaIB3avi from Loxosceles deserta (Desert recluse spider).